Reading from the N-terminus, the 365-residue chain is Eukaryotic translation initiation factor 3 subunit H (365 aa).

The MPN domain maps to 11-160; it reads VQVEALVVMK…LRAFRLSPQF (150 aa). Residues 273-303 are a coiled coil; that stretch reads YQRSLAREQTKIAAWQAKRKAENATRAQLKQ.

This sequence belongs to the eIF-3 subunit H family. As to quaternary structure, component of the eukaryotic translation initiation factor 3 (eIF-3) complex.

The protein localises to the cytoplasm. Component of the eukaryotic translation initiation factor 3 (eIF-3) complex, which is involved in protein synthesis of a specialized repertoire of mRNAs and, together with other initiation factors, stimulates binding of mRNA and methionyl-tRNAi to the 40S ribosome. The eIF-3 complex specifically targets and initiates translation of a subset of mRNAs involved in cell proliferation. This chain is Eukaryotic translation initiation factor 3 subunit H, found in Coccidioides immitis (strain RS) (Valley fever fungus).